A 314-amino-acid polypeptide reads, in one-letter code: Ribonuclease Z (314 aa).

7 residues coordinate Zn(2+): H63, H65, D67, H68, H142, D205, and H263. The active-site Proton acceptor is the D67.

Belongs to the RNase Z family. In terms of assembly, homodimer. Zn(2+) is required as a cofactor.

The enzyme catalyses Endonucleolytic cleavage of RNA, removing extra 3' nucleotides from tRNA precursor, generating 3' termini of tRNAs. A 3'-hydroxy group is left at the tRNA terminus and a 5'-phosphoryl group is left at the trailer molecule.. Its function is as follows. Zinc phosphodiesterase, which displays some tRNA 3'-processing endonuclease activity. Probably involved in tRNA maturation, by removing a 3'-trailer from precursor tRNA. The sequence is that of Ribonuclease Z from Kineococcus radiotolerans (strain ATCC BAA-149 / DSM 14245 / SRS30216).